Reading from the N-terminus, the 292-residue chain is tRNA-splicing endonuclease (292 aa).

Catalysis depends on residues Tyr-231, His-238, and Lys-267.

It belongs to the tRNA-intron endonuclease family. Archaeal long subfamily. As to quaternary structure, homodimer.

It catalyses the reaction pretRNA = a 3'-half-tRNA molecule with a 5'-OH end + a 5'-half-tRNA molecule with a 2',3'-cyclic phosphate end + an intron with a 2',3'-cyclic phosphate and a 5'-hydroxyl terminus.. In terms of biological role, endonuclease that removes tRNA introns. Cleaves pre-tRNA at the 5'- and 3'-splice sites to release the intron. The products are an intron and two tRNA half-molecules bearing 2',3' cyclic phosphate and 5'-OH termini. Recognizes a pseudosymmetric substrate in which 2 bulged loops of 3 bases are separated by a stem of 4 bp. This chain is tRNA-splicing endonuclease, found in Thermoplasma volcanium (strain ATCC 51530 / DSM 4299 / JCM 9571 / NBRC 15438 / GSS1).